The following is a 208-amino-acid chain: MKIVEVNHPLVKHKLGLMRAHDISTKRFRELAAEIGSLLTYEATADLETEKVTIDGWCGPVVVEQIKGKKITVVPILRAGLGMMDGVLENVPSARISVVGVYRNEETLEPVPYFQKLASNIDERMALLVDPMLATGGSMIATIDLLKKAGCQSIKVLVLVAAPEGIAALEKAHPDVELYTASIDERLNEQGYIVPGLGDAGDKIFGTK.

Residues arginine 78, arginine 103, and 130–138 (DPMLATGGS) contribute to the 5-phospho-alpha-D-ribose 1-diphosphate site. Uracil-binding positions include isoleucine 193 and 198–200 (GDA). A 5-phospho-alpha-D-ribose 1-diphosphate-binding site is contributed by aspartate 199.

The protein belongs to the UPRTase family. Requires Mg(2+) as cofactor.

The catalysed reaction is UMP + diphosphate = 5-phospho-alpha-D-ribose 1-diphosphate + uracil. Its pathway is pyrimidine metabolism; UMP biosynthesis via salvage pathway; UMP from uracil: step 1/1. Its activity is regulated as follows. Allosterically activated by GTP. Functionally, catalyzes the conversion of uracil and 5-phospho-alpha-D-ribose 1-diphosphate (PRPP) to UMP and diphosphate. This is Uracil phosphoribosyltransferase from Photorhabdus laumondii subsp. laumondii (strain DSM 15139 / CIP 105565 / TT01) (Photorhabdus luminescens subsp. laumondii).